The sequence spans 175 residues: Ribosome maturation factor RimM (175 aa).

In terms of domain architecture, PRC barrel spans 98–172; it reads DGEFHVRDLQ…WLLITPPKGL (75 aa).

This sequence belongs to the RimM family. In terms of assembly, binds ribosomal protein uS19.

It localises to the cytoplasm. Functionally, an accessory protein needed during the final step in the assembly of 30S ribosomal subunit, possibly for assembly of the head region. Essential for efficient processing of 16S rRNA. May be needed both before and after RbfA during the maturation of 16S rRNA. It has affinity for free ribosomal 30S subunits but not for 70S ribosomes. In Synechococcus sp. (strain RCC307), this protein is Ribosome maturation factor RimM.